The chain runs to 222 residues: ATP-dependent Clp protease proteolytic subunit 1 (222 aa).

The active-site Nucleophile is S121. Residue H146 is part of the active site.

This sequence belongs to the peptidase S14 family. As to quaternary structure, fourteen ClpP subunits assemble into 2 heptameric rings which stack back to back to give a disk-like structure with a central cavity, resembling the structure of eukaryotic proteasomes.

It localises to the cytoplasm. The catalysed reaction is Hydrolysis of proteins to small peptides in the presence of ATP and magnesium. alpha-casein is the usual test substrate. In the absence of ATP, only oligopeptides shorter than five residues are hydrolyzed (such as succinyl-Leu-Tyr-|-NHMec, and Leu-Tyr-Leu-|-Tyr-Trp, in which cleavage of the -Tyr-|-Leu- and -Tyr-|-Trp bonds also occurs).. Cleaves peptides in various proteins in a process that requires ATP hydrolysis. Has a chymotrypsin-like activity. Plays a major role in the degradation of misfolded proteins. The polypeptide is ATP-dependent Clp protease proteolytic subunit 1 (Thermobifida fusca (strain YX)).